A 65-amino-acid chain; its full sequence is Defensin-B3 (65 aa).

The first 21 residues, 1 to 21, serve as a signal peptide directing secretion; it reads MRLLLVFFFLSLLDQAPPARS. 3 disulfides stabilise this stretch: Cys29/Cys58, Cys36/Cys50, and Cys40/Cys59. Positions 62–65 are excised as a propeptide; it reads ESPR.

Belongs to the beta-defensin family. In terms of tissue distribution, lowly expressed in spleen, and expressed at lower levels in kidney, lung and testis.

The protein resides in the secreted. Its function is as follows. Has antimicrobial activity. This Ornithorhynchus anatinus (Duckbill platypus) protein is Defensin-B3.